The sequence spans 95 residues: Cell division topological specificity factor (95 aa).

It belongs to the MinE family.

Its function is as follows. Prevents the cell division inhibition by proteins MinC and MinD at internal division sites while permitting inhibition at polar sites. This ensures cell division at the proper site by restricting the formation of a division septum at the midpoint of the long axis of the cell. This Synechococcus sp. (strain CC9902) protein is Cell division topological specificity factor.